Here is a 55-residue protein sequence, read N- to C-terminus: Metallothionein-1 (55 aa).

This sequence belongs to the metallothionein superfamily. Type 11 family.

The chain is Metallothionein-1 (MTP1) from Yarrowia lipolytica (strain CLIB 122 / E 150) (Yeast).